Here is a 491-residue protein sequence, read N- to C-terminus: Aspartyl/glutamyl-tRNA(Asn/Gln) amidotransferase subunit B (491 aa).

It belongs to the GatB/GatE family. GatB subfamily. As to quaternary structure, heterotrimer of A, B and C subunits.

It carries out the reaction L-glutamyl-tRNA(Gln) + L-glutamine + ATP + H2O = L-glutaminyl-tRNA(Gln) + L-glutamate + ADP + phosphate + H(+). The catalysed reaction is L-aspartyl-tRNA(Asn) + L-glutamine + ATP + H2O = L-asparaginyl-tRNA(Asn) + L-glutamate + ADP + phosphate + 2 H(+). Allows the formation of correctly charged Asn-tRNA(Asn) or Gln-tRNA(Gln) through the transamidation of misacylated Asp-tRNA(Asn) or Glu-tRNA(Gln) in organisms which lack either or both of asparaginyl-tRNA or glutaminyl-tRNA synthetases. The reaction takes place in the presence of glutamine and ATP through an activated phospho-Asp-tRNA(Asn) or phospho-Glu-tRNA(Gln). This is Aspartyl/glutamyl-tRNA(Asn/Gln) amidotransferase subunit B from Burkholderia multivorans (strain ATCC 17616 / 249).